Reading from the N-terminus, the 224-residue chain is UPF0441 protein PC1_0312 (224 aa).

Positions 178-224 (PKTALAPKPATTSTITRGGFGETVAKQNSMQRSSASSSSSSSRSMGG) are disordered. Residues 209-224 (RSSASSSSSSSRSMGG) show a composition bias toward low complexity.

The protein belongs to the UPF0441 family.

In Pectobacterium carotovorum subsp. carotovorum (strain PC1), this protein is UPF0441 protein PC1_0312.